The following is a 103-amino-acid chain: Large ribosomal subunit protein bL21 (103 aa).

This sequence belongs to the bacterial ribosomal protein bL21 family. As to quaternary structure, part of the 50S ribosomal subunit. Contacts protein L20.

In terms of biological role, this protein binds to 23S rRNA in the presence of protein L20. This Psychrobacter arcticus (strain DSM 17307 / VKM B-2377 / 273-4) protein is Large ribosomal subunit protein bL21.